The sequence spans 38 residues: LECKDLGISIDDDNNRRLAVKEGDPLVVQFVNADREGN.

It belongs to the protease inhibitor I3 (leguminous Kunitz-type inhibitor) family. As to quaternary structure, heterodimer of an alpha and a beta chain linked by a disulfide bond.

Inhibition of trypsin. This Adenanthera pavonina (Sandal bead tree) protein is Trypsin inhibitor DE5 beta chain.